A 102-amino-acid chain; its full sequence is UPF0213 protein XAC3202 (102 aa).

One can recognise a GIY-YIG domain in the interval 5 to 80 (KPWHLYLLLC…KRLPRARKLA (76 aa)).

This sequence belongs to the UPF0213 family.

This chain is UPF0213 protein XAC3202, found in Xanthomonas axonopodis pv. citri (strain 306).